We begin with the raw amino-acid sequence, 310 residues long: Cell division protein FtsQ (310 aa).

The segment at 1 to 57 (MSEPENTAEDKDAEAAISADAVESETTADGGENPAEGESAEGPRMRARRERMERREA) is disordered. At 1–95 (MSEPENTAED…AGRGKVQGLQ (95 aa)) the chain is on the cytoplasmic side. A helical membrane pass occupies residues 96-116 (TLLLVVLLALIAVGLGSILYF). Residues 117-310 (TPLMSVRQTV…VSSPDLPTVK (194 aa)) are Extracellular-facing. The region spanning 120-188 (MSVRQTVVTG…STLRVTIVER (69 aa)) is the POTRA domain.

It belongs to the FtsQ/DivIB family. FtsQ subfamily.

It localises to the cell membrane. Essential cell division protein. The protein is Cell division protein FtsQ of Mycobacteroides abscessus (strain ATCC 19977 / DSM 44196 / CCUG 20993 / CIP 104536 / JCM 13569 / NCTC 13031 / TMC 1543 / L948) (Mycobacterium abscessus).